Consider the following 286-residue polypeptide: Light-independent protochlorophyllide reductase iron-sulfur ATP-binding protein (286 aa).

Residues 10–15 and Lys39 contribute to the ATP site; that span reads GIGKST. Ser14 is a Mg(2+) binding site. The [4Fe-4S] cluster site is built by Cys95 and Cys129. An ATP-binding site is contributed by 180–181; the sequence is NR.

The protein belongs to the NifH/BchL/ChlL family. As to quaternary structure, homodimer. Protochlorophyllide reductase is composed of three subunits; ChlL, ChlN and ChlB. Requires [4Fe-4S] cluster as cofactor.

It carries out the reaction chlorophyllide a + oxidized 2[4Fe-4S]-[ferredoxin] + 2 ADP + 2 phosphate = protochlorophyllide a + reduced 2[4Fe-4S]-[ferredoxin] + 2 ATP + 2 H2O. It functions in the pathway porphyrin-containing compound metabolism; chlorophyll biosynthesis (light-independent). Its function is as follows. Component of the dark-operative protochlorophyllide reductase (DPOR) that uses Mg-ATP and reduced ferredoxin to reduce ring D of protochlorophyllide (Pchlide) to form chlorophyllide a (Chlide). This reaction is light-independent. The L component serves as a unique electron donor to the NB-component of the complex, and binds Mg-ATP. In Synechococcus elongatus (strain ATCC 33912 / PCC 7942 / FACHB-805) (Anacystis nidulans R2), this protein is Light-independent protochlorophyllide reductase iron-sulfur ATP-binding protein.